The chain runs to 106 residues: Protein aveugle (106 aa).

Residues 26–91 (WTVSDVLKWY…WREIVKQRLK (66 aa)) form the SAM domain.

In terms of assembly, interacts with the SAM domain of cnk.

The protein localises to the cytoplasm. Its subcellular location is the membrane. Its function is as follows. Required for normal photoreceptor differentiation between Ras and Raf for EGFR signaling in the eye and for mitogen-activated protein kinase phosphorylation. Probably acts together with Cnk to promote Raf activation, perhaps by recruiting an activating kinase. This chain is Protein aveugle (ave), found in Drosophila melanogaster (Fruit fly).